Reading from the N-terminus, the 559-residue chain is T-complex protein 1 subunit gamma (559 aa).

A disulfide bridge connects residues Cys-369 and Cys-375. Positions 537–559 (GGASVTDGNGQEIPETFGDARDG) are disordered.

It belongs to the TCP-1 chaperonin family. As to quaternary structure, heterooligomeric complex of about 850 to 900 kDa that forms two stacked rings, 12 to 16 nm in diameter.

The protein resides in the cytoplasm. Molecular chaperone; assists the folding of proteins upon ATP hydrolysis. Known to play a role, in vitro, in the folding of actin and tubulin. The protein is T-complex protein 1 subunit gamma of Tetrahymena pyriformis.